Here is a 116-residue protein sequence, read N- to C-terminus: MADLMKFVQDEFVTRKDFPVFGAGDTITVFYEIKEGEKTRTQFFKGVVIQRRGSGNTETFTIRKMSGAVGVERIFPVNLPALQKIEINKKGAVRRARIFYFRELTGKKAKIRDKRR.

Belongs to the bacterial ribosomal protein bL19 family.

In terms of biological role, this protein is located at the 30S-50S ribosomal subunit interface and may play a role in the structure and function of the aminoacyl-tRNA binding site. This Flavobacterium psychrophilum (strain ATCC 49511 / DSM 21280 / CIP 103535 / JIP02/86) protein is Large ribosomal subunit protein bL19.